Consider the following 997-residue polypeptide: Protein translocase subunit SecA (997 aa).

Residues glutamine 102, 120–124, and aspartate 521 each bind ATP; that span reads GEGKT. Residues 893–997 are disordered; that stretch reads PADASPNGVV…KYKKCHGAEA (105 aa). Residues 938–953 show a composition bias toward basic and acidic residues; that stretch reads AIEREFEKKKQQELSH. Zn(2+) contacts are provided by cysteine 981, cysteine 983, cysteine 992, and histidine 993. Residues 987–997 are compositionally biased toward basic residues; it reads KKYKKCHGAEA.

The protein belongs to the SecA family. As to quaternary structure, monomer and homodimer. Part of the essential Sec protein translocation apparatus which comprises SecA, SecYEG and auxiliary proteins SecDF. Other proteins may also be involved. Zn(2+) is required as a cofactor.

The protein resides in the cell inner membrane. It localises to the cytoplasm. The enzyme catalyses ATP + H2O + cellular proteinSide 1 = ADP + phosphate + cellular proteinSide 2.. In terms of biological role, part of the Sec protein translocase complex. Interacts with the SecYEG preprotein conducting channel. Has a central role in coupling the hydrolysis of ATP to the transfer of proteins into and across the cell membrane, serving as an ATP-driven molecular motor driving the stepwise translocation of polypeptide chains across the membrane. The protein is Protein translocase subunit SecA of Acidobacterium capsulatum (strain ATCC 51196 / DSM 11244 / BCRC 80197 / JCM 7670 / NBRC 15755 / NCIMB 13165 / 161).